Reading from the N-terminus, the 475-residue chain is Protein ABCI7, chloroplastic (475 aa).

Residues 1–36 constitute a chloroplast transit peptide; that stretch reads MAAATVLGRLSLIPNLSSKPKLKSNRRTTSTSVSVR.

Interacts with NAP7.

The protein resides in the plastid. The protein localises to the chloroplast. This Arabidopsis thaliana (Mouse-ear cress) protein is Protein ABCI7, chloroplastic (ABCI7).